Consider the following 443-residue polypeptide: Xaa-Pro dipeptidase (443 aa).

5 residues coordinate Mn(2+): Asp246, Asp257, His339, Glu384, and Glu423.

This sequence belongs to the peptidase M24B family. Bacterial-type prolidase subfamily. Mn(2+) is required as a cofactor.

The enzyme catalyses Xaa-L-Pro dipeptide + H2O = an L-alpha-amino acid + L-proline. Splits dipeptides with a prolyl residue in the C-terminal position. This chain is Xaa-Pro dipeptidase, found in Citrobacter koseri (strain ATCC BAA-895 / CDC 4225-83 / SGSC4696).